A 308-amino-acid chain; its full sequence is Carnitine transport binding protein OpuCC (308 aa).

The signal sequence occupies residues 1–22; the sequence is MKKKFIALFSVLLLTSSLFLSS. Cysteine 23 carries N-palmitoyl cysteine lipidation. Cysteine 23 is lipidated: S-diacylglycerol cysteine.

Belongs to the OsmX family. The complex is composed of two ATP-binding proteins (OpuCA), two transmembrane proteins (OpuCB and OpuCD) and a solute-binding protein (OpuCC).

The protein localises to the cell membrane. Part of the ABC transporter complex OpuCABCD involved in carnitine uptake. Involved, with BetL and GbuABC, in osmoprotection and cryoprotection of Listeria. Can also mediate weak glycine betaine transport. The chain is Carnitine transport binding protein OpuCC (opuCC) from Listeria monocytogenes serotype 1/2a (strain 10403S).